A 977-amino-acid chain; its full sequence is METKGYHSRPEGLDMERRWGQVSQPVDRPSLGPAERTEENNYMEIVNVSCVSGAIPNNSTQGSSKEKQELLPCLQQDNTQSGILTSEIKTELEPKELSATVAESMGLYMDSVREADYAFEQHAQQGSLSPAKIYQNVEQLMKFYKENGHRSSTLSNVSRPSRSFLPDPGSAVNGGVMRAMVKSPILCHEKSPSVCSPLNMTSSVCSPAGINSVSSTTVRFGSFPVHSPITQGTPLTCSPTVDNRGSRSHSPAHASNVGSPLSSPLSSMKSPISSPPSHCSVKSPVSSPNNVTLRSCVSSPANINNSRCSVSSPSKANNRSTLSSPAASTVGSICSPNAFSYPASGASVGSSATRDVIPSPDTHEKGAHEVPFPKTEEVENAISNGVTGQLNIVQYIKPEPDGAFSSSCLGGNSKIHSDSPFSSVPIKQESTKHSCSGASFKGNPTVNPFPFMDGSYFSFMDDKDYYSLSGILGPPVPGFEGNCEGTGFPMGIKQEPDYGIYYPEASIPSSAIVGVNSGGQSFHYRIGAQGTISLSRSARDQSFQHLSSFPPVNTLVESWKSHGDLSARKIDGYPVLEYIPENVSSSTLRSVSTGSSRPSKICLVCGDGASGCHYGVVTCGSCKVFFKRAVEGQHNYLCAGRNDCIIDKIRRKNCPACRLQKCLQAGMNLGARKSKKLGKLKGLHEEQPQQPPPPQSPEEGTTYIAPAKEPSVNTALVPQLSSISRALTPSPVMVLENIEPEIVYAGYDSSKPDTAENLLSTLNRLAGKQMIQVVKWAKVLPGFKNLPLEDQITLIQYSRMCLSSFALSWRSYKHTNSQFFYFAPDLVFNEEKMHQSAMYELCQGMHQISLQFVRLQFTFEEYTFMEVLLLLSTIPKDGLKSQAAFEEMRANYIKELRKMVTKCPNNSGQSWQGFYQLTKFLDSMHDLVSDLLEFCFYTFRELQALKVEFPAMLVEIISDQLPKVESGNAKPLYFHRK.

Residues 1–19 are compositionally biased toward basic and acidic residues; the sequence is METKGYHSRPEGLDMERRW. 2 disordered regions span residues 1–37 and 231–288; these read METK…AERT and QGTP…VSSP. Positions 1–601 are modulating; the sequence is METKGYHSRP…STGSSRPSKI (601 aa). Residues 231–243 are compositionally biased toward polar residues; it reads QGTPLTCSPTVDN. A phosphoserine mark is found at Ser250, Ser259, Ser283, Ser287, and Ser299. The span at 259–288 shows a compositional bias: low complexity; the sequence is SPLSSPLSSMKSPISSPPSHCSVKSPVSSP. Disordered stretches follow at residues 305–327 and 344–368; these read NSRC…SPAA and SGAS…KGAH. Zn(2+)-binding residues include Cys602, Cys605, Cys619, Cys622, Cys638, Cys644, Cys654, and Cys657. 2 NR C4-type zinc fingers span residues 602-622 and 638-662; these read CLVC…CGSC and CAGR…LQKC. A DNA-binding region (nuclear receptor) is located at residues 602 to 667; sequence CLVCGDGASG…RLQKCLQAGM (66 aa). The segment at 668-718 is hinge; that stretch reads NLGARKSKKLGKLKGLHEEQPQQPPPPQSPEEGTTYIAPAKEPSVNTALVP. The disordered stretch occupies residues 682–703; it reads GLHEEQPQQPPPPQSPEEGTTY. Residues 719–957 enclose the NR LBD domain; that stretch reads QLSSISRALT…EFPAMLVEII (239 aa). The 21-hydroxyprogesterone site is built by Asn763 and Gln769. Aldosterone contacts are provided by Asn763 and Gln769. The progesterone site is built by Asn763 and Gln769. An important for coactivator binding region spans residues 775–778; it reads KWAK. The 21-hydroxyprogesterone site is built by Arg810 and Thr938. Residues Arg810 and Thr938 each contribute to the aldosterone site. Progesterone contacts are provided by Arg810 and Thr938.

It belongs to the nuclear hormone receptor family. NR3 subfamily.

The protein resides in the cytoplasm. The protein localises to the nucleus. Its function is as follows. Receptor for both mineralocorticoids (MC) such as aldosterone and glucocorticoids (GC) such as corticosterone or cortisol. Binds to mineralocorticoid response elements (MRE) and transactivates target genes. The effect of MC is to increase ion and water transport and thus raise extracellular fluid volume and blood pressure and lower potassium levels. The sequence is that of Mineralocorticoid receptor (NR3C2) from Tupaia belangeri (Common tree shrew).